We begin with the raw amino-acid sequence, 610 residues long: Glutamine--fructose-6-phosphate aminotransferase [isomerizing] (610 aa).

C2 (nucleophile; for GATase activity) is an active-site residue. Residues 2 to 219 (CGIVGYAGKK…SGEWGYFSQN (218 aa)) form the Glutamine amidotransferase type-2 domain. 2 consecutive SIS domains span residues 287–431 (SKDV…SDEE) and 459–600 (MSSH…PDQP). K605 serves as the catalytic For Fru-6P isomerization activity.

As to quaternary structure, homodimer.

The protein localises to the cytoplasm. It catalyses the reaction D-fructose 6-phosphate + L-glutamine = D-glucosamine 6-phosphate + L-glutamate. Its function is as follows. Catalyzes the first step in hexosamine metabolism, converting fructose-6P into glucosamine-6P using glutamine as a nitrogen source. In Leptospira interrogans serogroup Icterohaemorrhagiae serovar copenhageni (strain Fiocruz L1-130), this protein is Glutamine--fructose-6-phosphate aminotransferase [isomerizing].